The chain runs to 611 residues: Virulence metalloprotease (611 aa).

The signal sequence occupies residues 1-25 (MKKVQRQMKWLFLAASISAALPVSA). Positions 26–199 (AKMVQVDDPS…VLQTWEGLNH (174 aa)) are excised as a propeptide. His346 provides a ligand contact to Zn(2+). Glu347 is a catalytic residue. 2 residues coordinate Zn(2+): His350 and Glu370. Residue His429 is the Proton donor of the active site.

It belongs to the peptidase M4 family. The cofactor is Ca(2+). Requires Zn(2+) as cofactor. In terms of processing, seems to be more extensively processed.

It is found in the secreted. Its function is as follows. Extracellular zinc metalloprotease involved in the virulence mechanism of V.anguillarum. The chain is Virulence metalloprotease (empA) from Vibrio anguillarum (Listonella anguillarum).